The sequence spans 378 residues: Alginate lyase (378 aa).

The N-terminal stretch at 1–28 (MQTPKLIRPTLLSMAILSSMAWATGASA) is a signal peptide. Substrate-binding positions include 67 to 68 (SK), 140 to 141 (HT), and tyrosine 258.

The protein belongs to the polysaccharide lyase 5 family.

Its subcellular location is the periplasm. The catalysed reaction is Eliminative cleavage of alginate to give oligosaccharides with 4-deoxy-alpha-L-erythro-hex-4-enuronosyl groups at their non-reducing ends and beta-D-mannuronate at their reducing end.. The monovalent cation sodium enhances activity but is not absolutely required. Functionally, catalyzes the depolymerization of alginate by cleaving the beta-1,4 glycosidic bond between two adjacent sugar residues via a beta-elimination mechanism. Degrades deacetylated polymannuronate (polyM) alginate from P.aeruginosa more efficiently than non-deacetylated polyM and alginate from M.pyrifera. AlgL from P.syringae also degrades its own alginate, which may indicate a role in cleaving preformed alginate and/or in determining the length of the alginate polymer. May serve to degrade mislocalized alginate that is trapped in the periplasmic space. This chain is Alginate lyase, found in Pseudomonas syringae pv. syringae.